We begin with the raw amino-acid sequence, 229 residues long: Peptidase E (229 aa).

Residues Ser-120, Asp-135, and His-157 each act as charge relay system in the active site.

This sequence belongs to the peptidase S51 family.

Its subcellular location is the cytoplasm. It catalyses the reaction Dipeptidase E catalyzes the hydrolysis of dipeptides Asp-|-Xaa. It does not act on peptides with N-terminal Glu, Asn or Gln, nor does it cleave isoaspartyl peptides.. In terms of biological role, hydrolyzes dipeptides containing N-terminal aspartate residues. May play a role in allowing the cell to use peptide aspartate to spare carbon otherwise required for the synthesis of the aspartate family of amino acids. This chain is Peptidase E, found in Shigella flexneri serotype 5b (strain 8401).